Here is a 377-residue protein sequence, read N- to C-terminus: S-adenosylmethionine synthase (377 aa).

His14 provides a ligand contact to ATP. Mg(2+) is bound at residue Asp16. Glu42 serves as a coordination point for K(+). Residue Gln98 coordinates L-methionine. The tract at residues 98–108 (QSADIALGIDL) is flexible loop. ATP contacts are provided by residues 162-164 (DMK), 228-229 (RF), Asp237, 243-244 (RK), Ala260, and Lys264. Asp237 lines the L-methionine pocket. Lys268 is an L-methionine binding site.

The protein belongs to the AdoMet synthase family. Homotetramer; dimer of dimers. It depends on Mg(2+) as a cofactor. K(+) serves as cofactor.

The protein localises to the cytoplasm. It catalyses the reaction L-methionine + ATP + H2O = S-adenosyl-L-methionine + phosphate + diphosphate. It functions in the pathway amino-acid biosynthesis; S-adenosyl-L-methionine biosynthesis; S-adenosyl-L-methionine from L-methionine: step 1/1. Functionally, catalyzes the formation of S-adenosylmethionine (AdoMet) from methionine and ATP. The overall synthetic reaction is composed of two sequential steps, AdoMet formation and the subsequent tripolyphosphate hydrolysis which occurs prior to release of AdoMet from the enzyme. This chain is S-adenosylmethionine synthase, found in Mesoplasma florum (strain ATCC 33453 / NBRC 100688 / NCTC 11704 / L1) (Acholeplasma florum).